Reading from the N-terminus, the 410-residue chain is Mitochondrial potassium channel (410 aa).

The transit peptide at 1–35 (MTGCSPVFTMQQVVGVSHRLVWRTFRGTDLLMTRT) directs the protein to the mitochondrion. At 36-201 (LCSPGPSRPG…KERTRAERTK (166 aa)) the chain is on the mitochondrial matrix side. Positions 116-143 (VREAREDLEAQQTKLKEVRDRLDRVSRE) form a coiled coil. The chain crosses the membrane as a helical span at residues 202–222 (NWSLIGSVLGALIGVAGSTYV). Topologically, residues 223–385 (NRVRLQELKA…RLEAQANRNA (163 aa)) are mitochondrial intermembrane. The segment at 276–296 (GQDQGSGSPTGPSSPRGKDID) is disordered. Residues 280-290 (GSGSPTGPSSP) show a composition bias toward low complexity. Residues 386-406 (ISSTLVTCVTFMATLPLLYML) traverse the membrane as a helical segment. At 407 to 410 (FKTS) the chain is on the mitochondrial matrix side.

The mitochondrial potassium channel (mitoK(ATP)) forms a heteromultimer.

The protein localises to the mitochondrion inner membrane. It catalyses the reaction K(+)(in) = K(+)(out). Its activity is regulated as follows. Channel activity inhibited by ATP via ABCB8/MITOSUR subunit. Pore-forming subunit of the mitochondrial ATP-gated potassium channel (mitoK(ATP)). Together with ATP-binding subunit ABCB8/MITOSUR of the mitoK(ATP) channel, mediates ATP-dependent K(+) currents across the mitochondrial inner membrane. An increase in ATP intracellular levels closes the channel, inhibiting K(+) transport, whereas a decrease in ATP levels enhances K(+) uptake in the mitochondrial matrix. May contribute to the homeostatic control of cellular metabolism under stress conditions by regulating the mitochondrial matrix volume. This Rattus norvegicus (Rat) protein is Mitochondrial potassium channel.